Consider the following 336-residue polypeptide: uncharacterized protein (336 aa).

This is an uncharacterized protein from Mycoplasma capricolum subsp. capricolum (strain California kid / ATCC 27343 / NCTC 10154).